The sequence spans 335 residues: ADP-L-glycero-D-manno-heptose-6-epimerase (335 aa).

NADP(+) is bound by residues 11-12 (FI), 32-33 (DD), K39, 75-79 (EGACS), and N92. Catalysis depends on Y139, which acts as the Proton acceptor. K143 serves as a coordination point for NADP(+). N172 is a substrate binding site. NADP(+)-binding residues include V173 and K181. K181 acts as the Proton acceptor in catalysis. Substrate-binding positions include R183, H190, 204 to 207 (FGDY), R217, and Y296.

The protein belongs to the NAD(P)-dependent epimerase/dehydratase family. HldD subfamily. Homopentamer. Requires NADP(+) as cofactor.

It catalyses the reaction ADP-D-glycero-beta-D-manno-heptose = ADP-L-glycero-beta-D-manno-heptose. It functions in the pathway nucleotide-sugar biosynthesis; ADP-L-glycero-beta-D-manno-heptose biosynthesis; ADP-L-glycero-beta-D-manno-heptose from D-glycero-beta-D-manno-heptose 7-phosphate: step 4/4. Functionally, catalyzes the interconversion between ADP-D-glycero-beta-D-manno-heptose and ADP-L-glycero-beta-D-manno-heptose via an epimerization at carbon 6 of the heptose. This is ADP-L-glycero-D-manno-heptose-6-epimerase from Polaromonas naphthalenivorans (strain CJ2).